We begin with the raw amino-acid sequence, 550 residues long: Luciferin 4-monooxygenase (550 aa).

The Microbody targeting signal motif lies at 548–550 (SKL).

It belongs to the ATP-dependent AMP-binding enzyme family. Requires Mg(2+) as cofactor.

The protein resides in the peroxisome. The catalysed reaction is firefly D-luciferin + ATP + O2 = firefly oxyluciferin + hnu + AMP + CO2 + diphosphate. Produces green light with a wavelength of 562 nm. The protein is Luciferin 4-monooxygenase of Photinus pyralis (Common eastern firefly).